A 263-amino-acid chain; its full sequence is Methylesterase 3 (263 aa).

Ser85 (acyl-ester intermediate) is an active-site residue. Residues Asp213 and His241 each act as charge relay system in the active site.

The protein belongs to the AB hydrolase superfamily. Methylesterase family.

The catalysed reaction is methyl (indol-3-yl)acetate + H2O = (indol-3-yl)acetate + methanol + H(+). It catalyses the reaction methyl (-)-jasmonate + H2O = jasmonate + methanol + H(+). The protein operates within plant hormone biosynthesis. It participates in lipid metabolism; oxylipin biosynthesis. Its function is as follows. Methylesterase shown to have carboxylesterase activity, methyl indole-3-acetic acid (MeIAA) esterase activity and methyl jasmonate (MeJA) esterase activity in vitro. In Arabidopsis thaliana (Mouse-ear cress), this protein is Methylesterase 3.